Consider the following 312-residue polypeptide: Ubiquinone biosynthesis protein COQ9, mitochondrial (312 aa).

Residues 1-45 (MAATAAVSGVLRRLGWRLLQLRCLPVARCQSPLMPRAFHTAVGFR) constitute a mitochondrion transit peptide. The short motif at 17–32 (RLLQLRCLPVARCQSP) is the SIFI-degron element. The segment at 43–92 (GFRSSEEQRQQPPHSSQQHSETQGPEFSRPPPRYTDQSGEEEEDYESEEQ) is disordered. A compositionally biased stretch (low complexity) spans 52–63 (QQPPHSSQQHSE). Ser80 is subject to Phosphoserine. The segment covering 80–91 (SGEEEEDYESEE) has biased composition (acidic residues). Position 169 is an N6-acetyllysine (Lys169). Arg238 contacts a 1,2-diacylglycero-3-phosphoethanolamine.

The protein belongs to the COQ9 family. Homodimer. Heterodimer; two heterodimers of COQ7:COQ9 come together on the same side of the lipid pseudo-bilayer and form a curved tetramer with a hydrophobic surface suitable for membrane interaction. These two tetramers assemble into a soluble octamer with a pseudo-bilayer of lipids captured within. Interacts with COQ7; this interaction allows ubiquinone (CoQ) isoprene intermediates presentation to COQ7 and facilitates the COQ7-mediated hydroxylase step. Post-translationally, in response to mitochondrial stress, the precursor protein is ubiquitinated by the SIFI complex in the cytoplasm before mitochondrial import, leading to its degradation. Within the SIFI complex, UBR4 initiates ubiquitin chain that are further elongated or branched by KCMF1.

The protein resides in the mitochondrion. Its pathway is cofactor biosynthesis; ubiquinone biosynthesis. Membrane-associated protein that warps the membrane surface to access and bind aromatic isoprenes with high specificity, including ubiquinone (CoQ) isoprene intermediates and presents them directly to COQ7, therefore facilitating the COQ7-mediated hydroxylase step. Participates in the biosynthesis of coenzyme Q, also named ubiquinone, an essential lipid-soluble electron transporter for aerobic cellular respiration. This chain is Ubiquinone biosynthesis protein COQ9, mitochondrial, found in Rattus norvegicus (Rat).